An 807-amino-acid polypeptide reads, in one-letter code: Spondin-1 (807 aa).

An N-terminal signal peptide occupies residues 1–28 (MRLSPAPLRLSRGPALLALALPLAAALA). Residues 29–194 (FSDETLDKVA…DPTLDGVTDR (166 aa)) enclose the Reelin domain. Intrachain disulfides connect cysteine 44/cysteine 128, cysteine 156/cysteine 182, cysteine 199/cysteine 336, cysteine 200/cysteine 340, cysteine 202/cysteine 415, cysteine 443/cysteine 480, cysteine 454/cysteine 489, cysteine 459/cysteine 494, cysteine 502/cysteine 538, cysteine 513/cysteine 517, cysteine 548/cysteine 554, cysteine 559/cysteine 595, cysteine 570/cysteine 574, cysteine 605/cysteine 610, cysteine 615/cysteine 650, cysteine 626/cysteine 630, and cysteine 660/cysteine 665. A Spondin domain is found at 195–388 (PILDCCACGT…LTSLDHPQSP (194 aa)). Residue asparagine 214 is glycosylated (N-linked (GlcNAc...) asparagine). Residues aspartate 325, aspartate 354, and aspartate 358 each coordinate Ca(2+). 5 consecutive TSP type-1 domains span residues 442–495 (TCIY…PGCS), 501–555 (TCTM…EECS), 558–611 (SCLV…PECH), 614–666 (PCLL…PECP), and 668–721 (DCEL…RKCL). Asparagine 681 carries N-linked (GlcNAc...) asparagine glycosylation. Residues 732 to 746 (REARESRRSEQLREE) show a composition bias toward basic and acidic residues. Residues 732–752 (REARESRRSEQLREESDGEQF) are disordered. The TSP type-1 6 domain occupies 754–806 (GCRMRPWTAWSECTKLCGGGIQERYMTVKKRFKSSQFTSCKDKKEIRACNVHP).

Binds to the central extracellular domain of APP and inhibits beta-secretase cleavage of APP. Expressed at high levels in the floor plate.

The protein resides in the secreted. It localises to the extracellular space. Its subcellular location is the extracellular matrix. Cell adhesion protein that promotes the attachment of spinal cord and sensory neuron cells and the outgrowth of neurites in vitro. May contribute to the growth and guidance of axons in both the spinal cord and the PNS. The chain is Spondin-1 (Spon1) from Rattus norvegicus (Rat).